Consider the following 97-residue polypeptide: Stefin-1 (97 aa).

The Secondary area of contact signature appears at 46-50 (QVVAG).

Belongs to the cystatin family.

Its subcellular location is the cytoplasm. In terms of biological role, this is an intracellular thiol proteinase inhibitor. The polypeptide is Stefin-1 (Stfa1) (Mus musculus (Mouse)).